The primary structure comprises 403 residues: Aspartic endopeptidase PEP1 (403 aa).

Positions 1 to 20 (MVQISQIGAVLAVCSTLTVA) are cleaved as a signal peptide. A propeptide spans 21-67 (APTKGKARFNVPQVAVPMKAVHHPAVAYARALHKFGMKVPKAVSDAA) (activation peptide). The Peptidase A1 domain occupies 82–400 (YVTQVTVGQG…DTEGPRIGFA (319 aa)). Asp98 is an active-site residue. N-linked (GlcNAc...) asparagine glycans are attached at residues Asn159 and Asn270. Residue Asp293 is part of the active site. Cys329 and Cys361 are oxidised to a cystine.

The protein belongs to the peptidase A1 family.

Its subcellular location is the secreted. It catalyses the reaction Hydrolysis of proteins with broad specificity. Generally favors hydrophobic residues in P1 and P1', but also accepts Lys in P1, which leads to activation of trypsinogen. Does not clot milk.. Functionally, secreted aspartic endopeptidase that allows assimilation of proteinaceous substrates. Can catalyze hydrolysis of the major structural proteins of basement membrane, elastin, collagen, and laminin. Thought to play a significant role in virulence. Its function is as follows. Can catalyze hydrolysis of the major structural proteins of basement membrane, elastin, collagen, and laminin. Thought to play a significant role in virulence. The protein is Aspartic endopeptidase PEP1 (PEP1) of Trichophyton verrucosum (strain HKI 0517).